The chain runs to 227 residues: Orotidine 5'-phosphate decarboxylase (227 aa).

Substrate contacts are provided by residues aspartate 8, lysine 30, 59–68 (DLKLYDIPNT), threonine 118, arginine 178, glutamine 187, glycine 207, and arginine 208. The active-site Proton donor is lysine 61.

The protein belongs to the OMP decarboxylase family. Type 1 subfamily. As to quaternary structure, homodimer.

It carries out the reaction orotidine 5'-phosphate + H(+) = UMP + CO2. Its pathway is pyrimidine metabolism; UMP biosynthesis via de novo pathway; UMP from orotate: step 2/2. In terms of biological role, catalyzes the decarboxylation of orotidine 5'-monophosphate (OMP) to uridine 5'-monophosphate (UMP). This Sulfurimonas denitrificans (strain ATCC 33889 / DSM 1251) (Thiomicrospira denitrificans (strain ATCC 33889 / DSM 1251)) protein is Orotidine 5'-phosphate decarboxylase.